Here is a 938-residue protein sequence, read N- to C-terminus: Protein translocase subunit SecA (938 aa).

ATP is bound by residues Gln-90, 108–112, and Asp-504; that span reads GEGKT.

It belongs to the SecA family. Monomer and homodimer. Part of the essential Sec protein translocation apparatus which comprises SecA, SecYEG and auxiliary proteins SecDF. Other proteins may also be involved.

It localises to the cell inner membrane. The protein localises to the cellular thylakoid membrane. The protein resides in the cytoplasm. It carries out the reaction ATP + H2O + cellular proteinSide 1 = ADP + phosphate + cellular proteinSide 2.. Part of the Sec protein translocase complex. Interacts with the SecYEG preprotein conducting channel. Has a central role in coupling the hydrolysis of ATP to the transfer of proteins into and across the cell membrane, serving as an ATP-driven molecular motor driving the stepwise translocation of polypeptide chains across the membrane. Its function is as follows. Probably participates in protein translocation into and across both the cytoplasmic and thylakoid membranes in cyanobacterial cells. In Microcystis aeruginosa (strain NIES-843 / IAM M-2473), this protein is Protein translocase subunit SecA.